A 357-amino-acid polypeptide reads, in one-letter code: uncharacterized protein (357 aa).

Residues 1-19 (MKRILSFIFIILFFNSSYA) form the signal peptide.

This is an uncharacterized protein from Rickettsia prowazekii (strain Madrid E).